We begin with the raw amino-acid sequence, 501 residues long: Glycerol kinase (501 aa).

Thr-14 is an ADP binding site. The ATP site is built by Thr-14, Thr-15, and Ser-16. Residue Thr-14 participates in sn-glycerol 3-phosphate binding. ADP is bound at residue Arg-18. Sn-glycerol 3-phosphate contacts are provided by Arg-84, Glu-85, Tyr-135, and Asp-244. Glycerol contacts are provided by Arg-84, Glu-85, Tyr-135, Asp-244, and Gln-245. 2 residues coordinate ADP: Thr-266 and Gly-309. ATP is bound by residues Thr-266, Gly-309, Gln-313, and Gly-410. 2 residues coordinate ADP: Gly-410 and Asn-414.

Belongs to the FGGY kinase family.

It catalyses the reaction glycerol + ATP = sn-glycerol 3-phosphate + ADP + H(+). It functions in the pathway polyol metabolism; glycerol degradation via glycerol kinase pathway; sn-glycerol 3-phosphate from glycerol: step 1/1. Its activity is regulated as follows. Inhibited by fructose 1,6-bisphosphate (FBP). Key enzyme in the regulation of glycerol uptake and metabolism. Catalyzes the phosphorylation of glycerol to yield sn-glycerol 3-phosphate. The polypeptide is Glycerol kinase (Deinococcus radiodurans (strain ATCC 13939 / DSM 20539 / JCM 16871 / CCUG 27074 / LMG 4051 / NBRC 15346 / NCIMB 9279 / VKM B-1422 / R1)).